Here is a 669-residue protein sequence, read N- to C-terminus: DNA ligase (669 aa).

NAD(+)-binding positions include 34 to 38 (DAEYD), 83 to 84 (SL), and Glu114. Lys116 serves as the catalytic N6-AMP-lysine intermediate. Residues Arg137, Glu171, Lys287, and Lys311 each contribute to the NAD(+) site. Cys405, Cys408, Cys423, and Cys428 together coordinate Zn(2+). The BRCT domain maps to 591–669 (NVESYFAGKT…EERFLQELNK (79 aa)).

This sequence belongs to the NAD-dependent DNA ligase family. LigA subfamily. The cofactor is Mg(2+). Mn(2+) is required as a cofactor.

The enzyme catalyses NAD(+) + (deoxyribonucleotide)n-3'-hydroxyl + 5'-phospho-(deoxyribonucleotide)m = (deoxyribonucleotide)n+m + AMP + beta-nicotinamide D-nucleotide.. In terms of biological role, DNA ligase that catalyzes the formation of phosphodiester linkages between 5'-phosphoryl and 3'-hydroxyl groups in double-stranded DNA using NAD as a coenzyme and as the energy source for the reaction. It is essential for DNA replication and repair of damaged DNA. This Bacillus cereus (strain AH820) protein is DNA ligase.